Reading from the N-terminus, the 187-residue chain is Late expression factor 11 (187 aa).

Disordered stretches follow at residues 1–24 and 119–187; these read MAPA…RNRD and GDTK…QSQQ.

This sequence belongs to the baculoviridae LEF-11 family.

Functionally, involved in late/very late gene activation. This Lymantria dispar multicapsid nuclear polyhedrosis virus (LdMNPV) protein is Late expression factor 11 (LEF-11).